Consider the following 185-residue polypeptide: Movement protein P1 (185 aa).

Its function is as follows. Transports viral genome to neighboring plant cells directly through plasmosdesmata, without any budding. The movement protein allows efficient cell to cell propagation, by bypassing the host cell wall barrier (Potential). Likely acts as a suppressor of RNA-mediated gene silencing, also known as post-transcriptional gene silencing (PTGS), a mechanism of plant viral defense that performs sequence-specific inhibition of viral mRNAs expression. This chain is Movement protein P1, found in Glycine max (Soybean).